Here is a 337-residue protein sequence, read N- to C-terminus: Anthranilate phosphoribosyltransferase (337 aa).

5-phospho-alpha-D-ribose 1-diphosphate-binding positions include glycine 81, 84-85 (GD), serine 89, 91-94 (NVST), 109-117 (KHGNRALSS), and alanine 121. Glycine 81 contributes to the anthranilate binding site. Residue serine 93 coordinates Mg(2+). Asparagine 112 contributes to the anthranilate binding site. Residue arginine 167 coordinates anthranilate. The Mg(2+) site is built by aspartate 226 and glutamate 227.

The protein belongs to the anthranilate phosphoribosyltransferase family. In terms of assembly, homodimer. It depends on Mg(2+) as a cofactor.

The catalysed reaction is N-(5-phospho-beta-D-ribosyl)anthranilate + diphosphate = 5-phospho-alpha-D-ribose 1-diphosphate + anthranilate. The protein operates within amino-acid biosynthesis; L-tryptophan biosynthesis; L-tryptophan from chorismate: step 2/5. Catalyzes the transfer of the phosphoribosyl group of 5-phosphorylribose-1-pyrophosphate (PRPP) to anthranilate to yield N-(5'-phosphoribosyl)-anthranilate (PRA). The polypeptide is Anthranilate phosphoribosyltransferase (Nitrobacter hamburgensis (strain DSM 10229 / NCIMB 13809 / X14)).